A 572-amino-acid chain; its full sequence is Urease subunit alpha (572 aa).

A Urease domain is found at 136-572 (GGIDTHIHWI…VPLAQRYFLF (437 aa)). Residues His141, His143, and Lys224 each contribute to the Ni(2+) site. Lys224 is subject to N6-carboxylysine. His226 is a substrate binding site. Ni(2+) is bound by residues His253 and His279. Catalysis depends on His327, which acts as the Proton donor. Asp367 contacts Ni(2+).

The protein belongs to the metallo-dependent hydrolases superfamily. Urease alpha subunit family. In terms of assembly, heterotrimer of UreA (gamma), UreB (beta) and UreC (alpha) subunits. Three heterotrimers associate to form the active enzyme. Requires Ni cation as cofactor. Carboxylation allows a single lysine to coordinate two nickel ions.

The protein resides in the cytoplasm. It catalyses the reaction urea + 2 H2O + H(+) = hydrogencarbonate + 2 NH4(+). It functions in the pathway nitrogen metabolism; urea degradation; CO(2) and NH(3) from urea (urease route): step 1/1. This is Urease subunit alpha from Actinobacillus pleuropneumoniae serotype 5b (strain L20).